The following is a 495-amino-acid chain: NADP/NAD-dependent aldehyde dehydrogenase PuuC (495 aa).

244–249 (GSTRTG) lines the NAD(+) pocket. Catalysis depends on residues Glu-267 and Cys-302.

This sequence belongs to the aldehyde dehydrogenase family.

The catalysed reaction is an aldehyde + NADP(+) + H2O = a carboxylate + NADPH + 2 H(+). It catalyses the reaction an aldehyde + NAD(+) + H2O = a carboxylate + NADH + 2 H(+). It carries out the reaction 4-(gamma-L-glutamylamino)butanal + NADP(+) + H2O = 4-(gamma-L-glutamylamino)butanoate + NADPH + 2 H(+). The enzyme catalyses 4-(gamma-L-glutamylamino)butanal + NAD(+) + H2O = 4-(gamma-L-glutamylamino)butanoate + NADH + 2 H(+). The protein operates within amine and polyamine degradation; putrescine degradation; 4-aminobutanoate from putrescine: step 3/4. Its activity is regulated as follows. Lithium ions exhibits the highest inhibition (97%). To a lesser extent (5-20%), potassium, sodium, and ammonium ions also inhibit PuuC activity. Transition metals, such as copper and zinc ions inhibit PuuC activity by more than 90%. The presence of heavy metals (mercury, silver) or sodium hydrogensulfite in the reaction mixture completely inactivate PuuC; in contrast, disulfide reductants such as DTT and 2-mercaptoethanol significantly increase its activity by 75% and 27%, respectively. Catalyzes the oxidation of 3-hydroxypropionaldehyde (3-HPA) to 3-hydroxypropionic acid (3-HP). It acts preferentially with NAD but can also use NADP. 3-HPA appears to be the most suitable substrate for PuuC followed by isovaleraldehyde, propionaldehyde, butyraldehyde, and valeraldehyde. It might play a role in propionate and/or acetic acid metabolisms. Also involved in the breakdown of putrescine through the oxidation of gamma-Glu-gamma-aminobutyraldehyde to gamma-Glu-gamma-aminobutyrate (gamma-Glu-GABA). The chain is NADP/NAD-dependent aldehyde dehydrogenase PuuC from Escherichia coli (strain K12).